The following is a 916-amino-acid chain: Protein translocase subunit SecA (916 aa).

Residues Gln-86, 104 to 108, and Asp-494 each bind ATP; that span reads GEGKT. A disordered region spans residues 859–916; that stretch reads LEAPEKPAQLQYTAPSEGGGTQTRVETRSTGRSGNPAKAAEQDAAKDAAKRPAKKKRR. The segment covering 880-891 has biased composition (polar residues); that stretch reads QTRVETRSTGRS. A compositionally biased stretch (basic and acidic residues) spans 898 to 908; that stretch reads AEQDAAKDAAK.

Belongs to the SecA family. As to quaternary structure, monomer and homodimer. Part of the essential Sec protein translocation apparatus which comprises SecA, SecYEG and auxiliary proteins SecDF. Other proteins may also be involved.

Its subcellular location is the cell membrane. The protein localises to the cytoplasm. The enzyme catalyses ATP + H2O + cellular proteinSide 1 = ADP + phosphate + cellular proteinSide 2.. Functionally, part of the Sec protein translocase complex. Interacts with the SecYEG preprotein conducting channel. Has a central role in coupling the hydrolysis of ATP to the transfer of proteins into and across the cell membrane, serving as an ATP-driven molecular motor driving the stepwise translocation of polypeptide chains across the membrane. The sequence is that of Protein translocase subunit SecA from Pseudarthrobacter chlorophenolicus (strain ATCC 700700 / DSM 12829 / CIP 107037 / JCM 12360 / KCTC 9906 / NCIMB 13794 / A6) (Arthrobacter chlorophenolicus).